A 427-amino-acid polypeptide reads, in one-letter code: Trigger factor (427 aa).

One can recognise a PPIase FKBP-type domain in the interval 160-240; it reads GDTLIGDVTK…VKEVKRLELP (81 aa).

This sequence belongs to the FKBP-type PPIase family. Tig subfamily.

Its subcellular location is the cytoplasm. It carries out the reaction [protein]-peptidylproline (omega=180) = [protein]-peptidylproline (omega=0). Involved in protein export. Acts as a chaperone by maintaining the newly synthesized protein in an open conformation. Functions as a peptidyl-prolyl cis-trans isomerase. This Chlorobaculum parvum (strain DSM 263 / NCIMB 8327) (Chlorobium vibrioforme subsp. thiosulfatophilum) protein is Trigger factor.